The primary structure comprises 596 residues: MTKSYNIIHHKFDVIVVGAGGAGLRAAFGMAEEGLNTACISKLFPTRSHTVAAQGGISAALGNMGADDWRWHMYDTVKGSDWLGDQDAIEYMCKNAPDAILELEHYGVPFSRTEEGKIYQRPFGGMTTEYGKGKAAQRTCAAADRTGHAILHTLYQQSLKHKVQFFIEYFAIDLLMENGECRGVVAWNLDDGSLHCFRAHNVVLATGGYGRAYFSATSAHTCTGDGGGMAIRAGLPLQDMEFVQFHPTGIYSAGCLITEGARGEGGYLVNANGERFMERYAPAAKDLASRDVVSRAMTIEIREGRGVGEHKDHVFLHLNHLSPEIVHSRLPGISETAKIFAGVDVTKEPIPVLPTVHYNMGGIPTNYHGQVIIKDGKNHNSVVKGLMSIGEAACVSVHGANRLGSNSLLDLVVFGRSAALKAAELIKPASPHKPVSEEALEKIISRFDKIRHSSGNISVADLRLKMQRTMQSHASVFRTQEVLDEGAEMISEIRSGYKDIKVNDKSLIWNSDLVEALELDNLLDQALVTVYSAAARKESRGAHAREDYPDRNDKEWMQHTLSGVDEAGKVVLDYKPVTLTTLSDEVKAIPPAKRVY.

FAD-binding positions include 18-23, 41-56, and aspartate 225; these read GAGGAG and SKLF…AQGG. Residue histidine 49 is modified to Tele-8alpha-FAD histidine. Histidine 246 and threonine 258 together coordinate substrate. The Proton acceptor role is filled by arginine 290. Position 357 (histidine 357) interacts with substrate. Residue glutamate 391 participates in FAD binding. Arginine 402 contributes to the substrate binding site. Residue 407–408 participates in FAD binding; that stretch reads SL.

This sequence belongs to the FAD-dependent oxidoreductase 2 family. FRD/SDH subfamily. In terms of assembly, part of an enzyme complex containing four subunits: a flavoprotein, an iron-sulfur, cytochrome b-556, and a hydrophobic anchor protein. Requires FAD as cofactor.

The protein localises to the cell inner membrane. It carries out the reaction a quinone + succinate = fumarate + a quinol. It functions in the pathway carbohydrate metabolism; tricarboxylic acid cycle; fumarate from succinate (bacterial route): step 1/1. This is Succinate dehydrogenase flavoprotein subunit (sdhA) from Rickettsia bellii (strain RML369-C).